The sequence spans 788 residues: Multi-functional prenyltransferase ltmE (788 aa).

Residues K18 and H51 each coordinate substrate. D58 contacts Mg(2+). Residues R67, K151, T152, Q182, N189, and K199 each coordinate substrate. Residues 283-337 form a disordered region; the sequence is DTLDGDDLTRPSTITQHEQDDHVDRAAIDAKSDASGSSNKSLTPPETAPTTDTLS. The span at 299-314 shows a compositional bias: basic and acidic residues; the sequence is HEQDDHVDRAAIDAKS. Residues 316–337 show a composition bias toward polar residues; that stretch reads ASGSSNKSLTPPETAPTTDTLS. 404–405 is an L-tryptophan binding site; sequence MA. Positions 427, 599, 601, 603, and 687 each coordinate substrate.

In the N-terminal section; belongs to the FPP/GGPP synthase family. This sequence in the C-terminal section; belongs to the tryptophan dimethylallyltransferase family. The cofactor is Mg(2+).

It functions in the pathway secondary metabolite biosynthesis. In terms of biological role, multi-functional prenyltransferase; part of the gene cluster that mediates the biosynthesis of lolitrems, indole-diterpene mycotoxins that are potent tremorgens in mammals, and are synthesized by clavicipitaceous fungal endophytes in association with their grass hosts. The geranylgeranyl diphosphate (GGPP) synthase ltmG is proposed to catalyze the first step in lolitrem biosynthesis. LtmG catalyzes a series of iterative condensations of isopentenyl diphosphate (IPP) with dimethylallyl diphosphate (DMAPP), geranyl diphosphate (GPP), and farnesyl diphosphate (FPP), to form GGPP. GGPP then condenses with indole-3-glycerol phosphate to form 3-geranylgeranylindole, an acyclic intermediate, to be incorporated into paxilline. Either ltmG or ltmC could be responsible for this step, as both are putative prenyl transferases. The FAD-dependent monooxygenase ltmM then catalyzes the epoxidation of the two terminal alkenes of the geranylgeranyl moiety, which is subsequently cyclized by ltmB, to paspaline. The cytochrome P450 monooxygenases ltmQ and ltmP can sequentially oxidize paspaline to terpendole E and terpendole F. Alternatively, ltmP converts paspaline to an intermediate which is oxidized by ltmQ to terpendole F. LtmF, ltmK, ltmE and ltmJ appear to be unique to the epichloe endophytes. The prenyltransferase ltmF is involved in the 27-hydroxyl-O-prenylation. The cytochrome P450 monooxygenase ltmK is required for the oxidative acetal ring formation. The multi-functional prenyltransferase ltmE is required for C20- and C21-prenylations of the indole ring of paspalanes and acts together with the cytochrome P450 monooxygenase ltmJ to yield lolitremanes by multiple oxidations and ring closures. The stereoisomer pairs of lolitriol and lolitrem N or lolitrem B and lolitrem F may be attributed to variations in the way in which ring closure can occur under the action of ltmJ. While the major product of this pathway is lolitrem B, the prenyl transferases and cytochrome P450 monooxygenases identified in this pathway have a remarkable versatility in their regio- and stereo-specificities to generate a diverse range of metabolites that are products of a metabolic grid rather than a linear pathway. The sequence is that of Multi-functional prenyltransferase ltmE from Epichloe festucae var. lolii (Neotyphodium lolii).